A 176-amino-acid chain; its full sequence is Superoxide oxidase CybB (176 aa).

Residues 1 to 7 (MENKYSR) lie on the Cytoplasmic side of the membrane. The chain crosses the membrane as a helical span at residues 8 to 29 (LQISIHWLVFLLVIAAYCAMEF). A heme b-binding site is contributed by histidine 13. Residues 30 to 39 (RGFFPRSDRP) are Periplasmic-facing. Residues 40–64 (LINMIHVSCGISILVLMVVRLLLRL) traverse the membrane as a helical segment. Histidine 45 serves as a coordination point for heme b. The Cytoplasmic segment spans residues 65–77 (KYPTPPIIPKPKP). A helical transmembrane segment spans residues 78-103 (MMTGLAHLGHLVIYLLFIALPVIGLV). Topologically, residues 104–135 (MMYNRGNPWFAFGLTMPYASEANFERVDSLKS) are periplasmic. A helical transmembrane segment spans residues 136–158 (WHETLANLGYFVIGLHAAAALAH). Heme b is bound by residues histidine 137 and histidine 151. Topologically, residues 159-176 (HYFWKDNTLLRMMPRKRS) are cytoplasmic.

Belongs to the cytochrome b561 family. Monomer. Requires heme b as cofactor.

It is found in the cell inner membrane. It carries out the reaction a ubiquinol + 2 O2 = 2 superoxide + a ubiquinone + 2 H(+). The catalysed reaction is a menaquinol + 2 O2 = 2 superoxide + a menaquinone + 2 H(+). Its activity is regulated as follows. Quinone binding to the enzyme accelerates the reaction with superoxide. Functionally, B-type di-heme cytochrome. Catalyzes the oxidation of superoxide to molecular oxygen and transfers the extracted electrons to ubiquinone through the two hemes. Can also use menaquinone. The enzyme may be responsible for the detoxification of the superoxide anion produced in the membrane or at its surface. However, it can also efficiently catalyze the formation of superoxide from ubiquinol under physiological conditions. The chain is Superoxide oxidase CybB from Escherichia coli (strain K12).